The sequence spans 196 residues: 3-isopropylmalate dehydratase small subunit (196 aa).

This sequence belongs to the LeuD family. LeuD type 1 subfamily. As to quaternary structure, heterodimer of LeuC and LeuD.

It carries out the reaction (2R,3S)-3-isopropylmalate = (2S)-2-isopropylmalate. The protein operates within amino-acid biosynthesis; L-leucine biosynthesis; L-leucine from 3-methyl-2-oxobutanoate: step 2/4. Its function is as follows. Catalyzes the isomerization between 2-isopropylmalate and 3-isopropylmalate, via the formation of 2-isopropylmaleate. The protein is 3-isopropylmalate dehydratase small subunit of Streptococcus gordonii (strain Challis / ATCC 35105 / BCRC 15272 / CH1 / DL1 / V288).